Here is a 171-residue protein sequence, read N- to C-terminus: Putative lipoprotein LppO (171 aa).

The first 28 residues, M1–A28, serve as a signal peptide directing secretion. A lipid anchor (N-palmitoyl cysteine) is attached at C29. C29 carries S-diacylglycerol cysteine lipidation.

It is found in the cell membrane. In Mycobacterium tuberculosis (strain CDC 1551 / Oshkosh), this protein is Putative lipoprotein LppO (lppO).